A 672-amino-acid polypeptide reads, in one-letter code: DNA ligase (672 aa).

NAD(+) contacts are provided by residues 34 to 38 (DAEYD), 83 to 84 (SL), and glutamate 117. The active-site N6-AMP-lysine intermediate is lysine 119. NAD(+) contacts are provided by arginine 140, glutamate 177, lysine 293, and lysine 317. Zn(2+)-binding residues include cysteine 411, cysteine 414, cysteine 429, and cysteine 434. Residues 591-672 (RVGGRFTGKT…FLAMLGVCRT (82 aa)) enclose the BRCT domain.

This sequence belongs to the NAD-dependent DNA ligase family. LigA subfamily. It depends on Mg(2+) as a cofactor. Mn(2+) serves as cofactor.

The catalysed reaction is NAD(+) + (deoxyribonucleotide)n-3'-hydroxyl + 5'-phospho-(deoxyribonucleotide)m = (deoxyribonucleotide)n+m + AMP + beta-nicotinamide D-nucleotide.. Its function is as follows. DNA ligase that catalyzes the formation of phosphodiester linkages between 5'-phosphoryl and 3'-hydroxyl groups in double-stranded DNA using NAD as a coenzyme and as the energy source for the reaction. It is essential for DNA replication and repair of damaged DNA. The protein is DNA ligase of Geotalea uraniireducens (strain Rf4) (Geobacter uraniireducens).